The sequence spans 200 residues: MKLKAIMSKCEFIIGATHVKSFPNFSIPEIAIAGRSNVGKSSLINAITNNKKNAKTSSRPGCTKQINFYLINKSFMVLVDLPGYGYSKATRATINNYLFLMEYYLLNSKNLLKVILLIDVKVGFKEIDLDFINWLELNHIYYQLVLTKIDRVSKEILDVNINYIKNLNLGFVIYPVISASSKYKQGIGELIYEIAQCIKK.

Positions 26-200 constitute an EngB-type G domain; it reads SIPEIAIAGR…IYEIAQCIKK (175 aa). GTP-binding positions include 34-41, 61-65, 80-83, 147-150, and 176-179; these read GRSNVGKS, GCTKQ, DLPG, TKID, and VISA. Mg(2+)-binding residues include Ser-41 and Thr-63.

This sequence belongs to the TRAFAC class TrmE-Era-EngA-EngB-Septin-like GTPase superfamily. EngB GTPase family. It depends on Mg(2+) as a cofactor.

Functionally, necessary for normal cell division and for the maintenance of normal septation. In Ehrlichia canis (strain Jake), this protein is Probable GTP-binding protein EngB.